The chain runs to 356 residues: MAFSGCQAPYLSPAVPFSGTIQGGLQDGFQITVNGAVLSCSGTRFAVDFQTGFSGNDIAFHFNPRFEDGGYVVCNTRQKGTWGPEERKMHMPFQKGMPFDLCFLVQSSDFKVMVNGSLFVQYFHRVPFHRVDTISVNGSVQLSYISFQNPRAVPVQPAFSTVPFSQPVCFPPRPRGRRQKPPSVRPANPAPITQTVIHTVQSASGQMFSQTPAIPPMMYPHPAYPMPFITTIPGGLYPSKSIILSGTVLPSAQRFHINLCSGSHIAFHMNPRFDENAVVRNTQINNSWGSEERSLPRKMPFVRGQSFSVWILCEAHCLKVAVDGQHVFEYYHRLRNLPTINKLEVGGDIQLTHVQT.

A Galectin 1 domain is found at 17-148 (FSGTIQGGLQ…SVQLSYISFQ (132 aa)). 82–88 (WGPEERK) contacts a beta-D-galactoside. Positions 170–190 (FPPRPRGRRQKPPSVRPANPA) are disordered. One can recognise a Galectin 2 domain in the interval 228 to 356 (FITTIPGGLY…GDIQLTHVQT (129 aa)). Position 288-294 (288-294 (WGSEERS)) interacts with a beta-D-galactoside.

Functionally, binds galactosides. The polypeptide is Galectin-9C (LGALS9C) (Homo sapiens (Human)).